The sequence spans 495 residues: MNYLVLILVSLVSIYFLFIKNQDRKKKINSKIPGPKGFLFGNLIELARTKKNLHLKYLEWFEKYGPVFRVSIGSLETVVLTGYPILREAFIDNSDTFTSRFQRENARSINGYKGLINSNGDYHKNLKSVILSEMTATKIKKMESHINQESKRLCELLDQHAKQGTPFTMNKYLNLFSINIILRFLFGVNYPYTELDDGSSSIIQVIQQFLKLVSQPSITTYFPILSPFMNDRSKEFYDIHKLLSNHIINLIERYKDSKQHQQQEQEPIDGATEPTVTILDKLLIEVENNRITQNALISICIDVLIAGTDTVGQTLSFAIVALVNNAEIQEKLSRNIIDSMEKGDNHYSYSKYRNGIPYLALVVKEVFRMYPAGILGLPHMTSEDCEIQGHKIAKGTQIIQNIYSTHRSESFWPNPNNFIPERHIQNDVSKSVHFAVGTRNCMGMSLSEAEVHTAMAELFGNFKFTNPSNIPLNDQGTFSVALNCPDFFVKIERRN.

The chain crosses the membrane as a helical span at residues 1 to 21; sequence MNYLVLILVSLVSIYFLFIKN. Position 441 (Cys441) interacts with heme.

It belongs to the cytochrome P450 family. Heme serves as cofactor.

Its subcellular location is the membrane. The sequence is that of Probable cytochrome P450 513C1 (cyp513C1) from Dictyostelium discoideum (Social amoeba).